A 193-amino-acid chain; its full sequence is Holliday junction branch migration complex subunit RuvA (193 aa).

The segment at 1-64 (MIGRIAGVLL…EDAHLLYGFG (64 aa)) is domain I. The domain II stretch occupies residues 65-139 (TAEERSTFRE…GKIGADLGAM (75 aa)). The tract at residues 139 to 143 (MAGAA) is flexible linker. The segment at 144–193 (SASDHASDILNALLALGYSEKEALTAVKNVPAGTGVSEGIKLALKALSKG) is domain III.

The protein belongs to the RuvA family. In terms of assembly, homotetramer. Forms an RuvA(8)-RuvB(12)-Holliday junction (HJ) complex. HJ DNA is sandwiched between 2 RuvA tetramers; dsDNA enters through RuvA and exits via RuvB. An RuvB hexamer assembles on each DNA strand where it exits the tetramer. Each RuvB hexamer is contacted by two RuvA subunits (via domain III) on 2 adjacent RuvB subunits; this complex drives branch migration. In the full resolvosome a probable DNA-RuvA(4)-RuvB(12)-RuvC(2) complex forms which resolves the HJ.

Its subcellular location is the cytoplasm. Functionally, the RuvA-RuvB-RuvC complex processes Holliday junction (HJ) DNA during genetic recombination and DNA repair, while the RuvA-RuvB complex plays an important role in the rescue of blocked DNA replication forks via replication fork reversal (RFR). RuvA specifically binds to HJ cruciform DNA, conferring on it an open structure. The RuvB hexamer acts as an ATP-dependent pump, pulling dsDNA into and through the RuvAB complex. HJ branch migration allows RuvC to scan DNA until it finds its consensus sequence, where it cleaves and resolves the cruciform DNA. This is Holliday junction branch migration complex subunit RuvA from Paraburkholderia phytofirmans (strain DSM 17436 / LMG 22146 / PsJN) (Burkholderia phytofirmans).